We begin with the raw amino-acid sequence, 96 residues long: MF6 protein (96 aa).

The polypeptide is MF6 protein (Myxoma virus (strain Uriarra) (MYXV)).